A 241-amino-acid chain; its full sequence is Kynurenine formamidase (241 aa).

Residues 23–27 carry the HGGXW motif; it reads HGGAW. Catalysis depends on Ser-95, which acts as the Nucleophile. Catalysis depends on residues Asp-191 and His-223.

This sequence belongs to the kynurenine formamidase family. In terms of assembly, homodimer.

The enzyme catalyses N-formyl-L-kynurenine + H2O = L-kynurenine + formate + H(+). The protein operates within amino-acid degradation; L-tryptophan degradation via kynurenine pathway; L-kynurenine from L-tryptophan: step 2/2. Functionally, catalyzes the hydrolysis of N-formyl-L-kynurenine to L-kynurenine, the second step in the kynurenine pathway of tryptophan degradation. Kynurenine may be further oxidized to nicotinic acid, NAD(H) and NADP(H). Required for elimination of toxic metabolites. This Eremothecium gossypii (strain ATCC 10895 / CBS 109.51 / FGSC 9923 / NRRL Y-1056) (Yeast) protein is Kynurenine formamidase.